The primary structure comprises 314 residues: Zinc transporter ZIP3 (314 aa).

Residues 1-3 (MVK) lie on the Extracellular side of the membrane. The chain crosses the membrane as a helical span at residues 4-24 (LLVAKILCMVGVFFFMLLGSL). Over 25–42 (LPVKIIETDFEKAHRSKK) the chain is Cytoplasmic. Residues 43-63 (ILSLCNTFGGGVFLATCFNAL) traverse the membrane as a helical segment. Residues 64–85 (LPAVREKLQKVLSLGHISTDYP) lie on the Extracellular side of the membrane. The helical transmembrane segment at 86 to 106 (LAETILLLGFFMTVFLEQLIL) threads the bilayer. Over 107–169 (TFRKEKPSFI…QGLSRASPVR (63 aa)) the chain is Cytoplasmic. 2 positions are modified to phosphoserine: S125 and S129. The chain crosses the membrane as a helical span at residues 170–190 (LLSLAFALSAHSVFEGLALGL). The Extracellular segment spans residues 191–196 (QEEGEK). Residues 197–217 (VVSLFVGVAVHETLVAVALGI) form a helical membrane-spanning segment. Over 218–229 (SMARSAMPLRDA) the chain is Cytoplasmic. Residues 230-250 (AKLAVTVSAMIPLGIGLGLGI) form a helical membrane-spanning segment. The Extracellular portion of the chain corresponds to 251–262 (ESAQGVPGSVAS). Residues 263–283 (VLLQGLAGGTFLFITFLEILA) traverse the membrane as a helical segment. Residues 284–292 (KELEEKSDR) lie on the Cytoplasmic side of the membrane. The chain crosses the membrane as a helical span at residues 293–313 (LLKVLFLVLGYTVLAGMVFLK). A topological domain (extracellular) is located at residue W314.

It belongs to the ZIP transporter (TC 2.A.5) family.

The protein localises to the cell membrane. It is found in the apical cell membrane. It carries out the reaction Zn(2+)(in) = Zn(2+)(out). In terms of biological role, transporter for the divalent cation Zn(2+). Mediates the influx of Zn(2+) into cells from extracellular space. Controls Zn(2+) accumulation into dentate gyrus granule cells in the hippocampus. Mediates Zn(2+) reuptake from the secreted milk within the alveolar lumen. The sequence is that of Zinc transporter ZIP3 from Homo sapiens (Human).